Consider the following 246-residue polypeptide: Tyrosine recombinase XerD-like (246 aa).

One can recognise a Core-binding (CB) domain in the interval Met1–Tyr72. Residues Gln84–Arg246 enclose the Tyr recombinase domain. Catalysis depends on residues Lys149 and Arg212. Tyr244 acts as the O-(3'-phospho-DNA)-tyrosine intermediate in catalysis.

Belongs to the 'phage' integrase family. XerD-like subfamily.

The protein localises to the cytoplasm. Putative tyrosine recombinase. Not involved in the cutting and rejoining of the recombining DNA molecules on dif(SL) site. The polypeptide is Tyrosine recombinase XerD-like (Streptococcus agalactiae serotype V (strain ATCC BAA-611 / 2603 V/R)).